The following is a 466-amino-acid chain: Glutamate--tRNA ligase 1 (466 aa).

The 'HIGH' region motif lies at 9–19 (PSPTGYLHIGG). Residues Cys98, Cys100, Cys125, and Glu127 each contribute to the Zn(2+) site. The 'KMSKS' region signature appears at 236 to 240 (KLSKR). An ATP-binding site is contributed by Lys239.

It belongs to the class-I aminoacyl-tRNA synthetase family. Glutamate--tRNA ligase type 1 subfamily. As to quaternary structure, monomer. Zn(2+) is required as a cofactor.

It localises to the cytoplasm. The enzyme catalyses tRNA(Glu) + L-glutamate + ATP = L-glutamyl-tRNA(Glu) + AMP + diphosphate. In terms of biological role, catalyzes the attachment of glutamate to tRNA(Glu) in a two-step reaction: glutamate is first activated by ATP to form Glu-AMP and then transferred to the acceptor end of tRNA(Glu). The chain is Glutamate--tRNA ligase 1 from Acidithiobacillus ferrooxidans (strain ATCC 53993 / BNL-5-31) (Leptospirillum ferrooxidans (ATCC 53993)).